The sequence spans 332 residues: Nuclear migration protein nudC (332 aa).

A disordered region spans residues 122 to 161; sequence RQQLLDSAGGEPSASNRDGISKPIEKVDDESDKSELGKLM. Residues 168-259 enclose the CS domain; sequence CTLENYTWTQ…NKMNWWSRLV (92 aa).

The protein belongs to the nudC family. As to quaternary structure, interacts with PCID2.

It is found in the cytoplasm. Functionally, chaperone protein with functions in nuclear localization and cytoplasmic mRNA trafficking. In postmitotic neurons, acts with nudE downstream of dar1 to ensure correct positioning of the nuclei in primary dendrites and as a consequence, is required for determining multipolar neuron morphology. Stabilizes PCID2 in the cytoplasm and thereby is required for promoting cytoplasmic mRNA trafficking. The sequence is that of Nuclear migration protein nudC from Drosophila melanogaster (Fruit fly).